The primary structure comprises 524 residues: tRNA-2-methylthio-N(6)-dimethylallyladenosine synthase (524 aa).

Over residues 1–12 (MNTHPSHPDHPA) the composition is skewed to basic and acidic residues. Residues 1–23 (MNTHPSHPDHPADTLPARGNREG) form a disordered region. Residues 27-143 (RTYEVRTFGC…LPTLLNRAEH (117 aa)) enclose the MTTase N-terminal domain. Cys-36, Cys-72, Cys-106, Cys-180, Cys-184, and Cys-187 together coordinate [4Fe-4S] cluster. The Radical SAM core domain occupies 166–402 (RESAYAGWVS…MALQERICEE (237 aa)). The 72-residue stretch at 405–476 (QKFIGQTVEL…PFFLIADAGV (72 aa)) folds into the TRAM domain.

It belongs to the methylthiotransferase family. MiaB subfamily. As to quaternary structure, monomer. Requires [4Fe-4S] cluster as cofactor.

It localises to the cytoplasm. The catalysed reaction is N(6)-dimethylallyladenosine(37) in tRNA + (sulfur carrier)-SH + AH2 + 2 S-adenosyl-L-methionine = 2-methylsulfanyl-N(6)-dimethylallyladenosine(37) in tRNA + (sulfur carrier)-H + 5'-deoxyadenosine + L-methionine + A + S-adenosyl-L-homocysteine + 2 H(+). Functionally, catalyzes the methylthiolation of N6-(dimethylallyl)adenosine (i(6)A), leading to the formation of 2-methylthio-N6-(dimethylallyl)adenosine (ms(2)i(6)A) at position 37 in tRNAs that read codons beginning with uridine. The protein is tRNA-2-methylthio-N(6)-dimethylallyladenosine synthase of Corynebacterium efficiens (strain DSM 44549 / YS-314 / AJ 12310 / JCM 11189 / NBRC 100395).